The sequence spans 126 residues: Protein Wnt-1 (126 aa).

Residue Ser-1 is the site of O-palmitoleoyl serine; by PORCN attachment. Cys-92 and Cys-107 are joined by a disulfide. Asn-93 and Asn-123 each carry an N-linked (GlcNAc...) asparagine glycan.

This sequence belongs to the Wnt family. Post-translationally, palmitoleoylation is required for efficient binding to frizzled receptors. Palmitoleoylation is necessary for proper trafficking to cell surface. Depalmitoleoylated by NOTUM, leading to inhibit Wnt signaling pathway.

The protein resides in the secreted. The protein localises to the extracellular space. It localises to the extracellular matrix. Ligand for members of the frizzled family of seven transmembrane receptors. Acts in the canonical Wnt signaling pathway by promoting beta-catenin-dependent transcriptional activation. Plays an essential role in the development of the embryonic brain and central nervous system (CNS). Has a role in osteoblast function, bone development and bone homeostasis. In Pituophis melanoleucus (Pine snake), this protein is Protein Wnt-1 (WNT-1).